The primary structure comprises 368 residues: Chorismate synthase (368 aa).

An NADP(+)-binding site is contributed by R46. FMN contacts are provided by residues 124–126 (RAS), G284, 299–303 (KPTPS), and R326.

This sequence belongs to the chorismate synthase family. It depends on FMNH2 as a cofactor.

It catalyses the reaction 5-O-(1-carboxyvinyl)-3-phosphoshikimate = chorismate + phosphate. It participates in metabolic intermediate biosynthesis; chorismate biosynthesis; chorismate from D-erythrose 4-phosphate and phosphoenolpyruvate: step 7/7. Its function is as follows. Catalyzes the anti-1,4-elimination of the C-3 phosphate and the C-6 proR hydrogen from 5-enolpyruvylshikimate-3-phosphate (EPSP) to yield chorismate, which is the branch point compound that serves as the starting substrate for the three terminal pathways of aromatic amino acid biosynthesis. This reaction introduces a second double bond into the aromatic ring system. This Pyrobaculum aerophilum (strain ATCC 51768 / DSM 7523 / JCM 9630 / CIP 104966 / NBRC 100827 / IM2) protein is Chorismate synthase.